A 1799-amino-acid chain; its full sequence is MAAAPTQIEAELYYLIARFLQSGPCNKSAQVLVQELEEHQLIPRRLDWEGKEHRRSFEDLVAANAHIPPDYLLKICERIGPLLDKEIPQSVPGVQTLLGVGRQSLLRDAKDCKSTLWNGSAFAALHRGRPPELPVNYVKPPNVVNITSARQLTGCSRFSHVFPSSAYQHIKMHKRILGHLSSVYCVAFDRSGRRIFTGSDDCLVKIWATDDGRLLATLRGHSAEISDMAVNYENTLIAAGSCDKVVRVWCLRTCAPVAVLQGHSASITSIQFCPSTKGTTRYLTSTGADGTICFWQWHVKTMKFRDRPVKFTERSRPGVQISCSSFSSGGMFITTGSTDHVIRIYYLGSEIPEKIAELESHTDKVVAVQFCNNGDSLRFVSGSRDGTARIWQYQQQEWKSIVLDMATKMSGNNLTSAEDKVTKLKVTMVAWDRYDTTVITAVNNFLLKVWNSVTGQLLHTLSGHDDEVFVLEAHPFDQRIILSAGHDGNIFIWDLDRGTKIRNYFNMIEGQGHGAVFDCKFSPDGNHFACTDSHGHLLLFGFGCSKYYEKIPDQMFFHTDYRPLIRDANNYVLDEQTQQAPHLMPPPFLVDVDGNPHPTKFQRLVPGRENCKDEQLIPQLGYVANGDGEVVEQVIGQQTNDQEESILDGIIRELQREQDLRLINEGDVPHFPINRSYSVNGALSSPNMDIPSSPNIGLRRSGQIEGVRQMHNNAPRSQMATERDLMAWSRRVVVNELNSGVSRVQEECRNAKGDLEVSLYTVEKKKKPSYPIQRNDYQPSCGRSLRRTQRKRQHTYLTRSNIEHNSQASSQTSGVQEDSDSSSEEDETVGTSDASVEDPVVEWQSESSSSDSSSEYSDWIADAGINLQPPKRQTRQATQKIYSSSEDENLKLEDRQKKPKQTKKKKGGLVSMAGEPNEEWLAPQWILDTIPRRSPFVPQMGDELIYFRQGHEAYVRAVRKSKIYSVNLQKQPWNKMDLREQEFVKIVGIKYEIGPPTLCCLKLAFLDPISGKMTGESFSIKYHDMPDVIDFLVLHQFYNEAKERNWQIGDRFRSIIDDAWWFGTVESQQPFQPEYPDSSFQCYSVHWDNNEREKMSPWDMEPIPDGTAFPDEVGAGIPVSQEELTALLYKPQEGEWGAHSRDEECERVIQGINNLLSLDFASPFAVPVDLSAYPLYCTVVAYPTDLNTIKQRLENRFYRRISALMWEVRYIEHNARTFNEPDSPIVKAAKIVTDVLLRFIGDQSCSDILDTYNKIKAEDPDSSDLEEDSEMVDLDSDGPGTSSGRRAKCRGRRQSLKCNPDAWKKQCEELLSLIYEREDSEPFRQPADPQSYPVQQQQEGESSQSVPPDRQDPSLSEDYQDGIDTPMDFSTVKETLESGNYDSPLEFYKDVRQIFSNSKAYTSNKKSRIYSMTLRLSALFENHIKNIISDYKSAIQSQKRRRPRYRKRLRSSSSSLSSSRAPSPKGKQKQMKLQPKNDQNTSVAYARTSSPFSSPVSDAAEGVSLYLLDDEGDGPFSPSSFSGYSRSGNSHDPGKAKSFRNRVLPAKQDHSLDGPLTNVDGREPRTGAKRKLLSASEEDESMGGEEKEMKETKEQVHLSSSESGELGSSLSSESTSGSDSDSESTSRTDQDYVDGDHDYSKFIQTRPKRKLRKQHTNGKRNWKTRGTGGRGRWGRWGRWSRGGRGRGGRGRGGRGRGGGGGRGRGRGRGGRGASRGSSRAKRARVADDEFDTMFSGRFSRLPRIKTRNQGRRTVLYNDDSDNDNFVSTEDPLNLGTSRSGRVRKMTEKARVSHLMGWNY.

WD repeat units lie at residues 170-209 (IKMH…IWAT), 213-251 (RLLA…VWCL), 255-297 (APVA…FWQW), 307-347 (RPVK…IYYL), 353-393 (EKIA…IWQY), 400-452 (SIVL…VWNS), 456-495 (QLLH…IWDL), and 502-542 (RNYF…LFGF). Ser-693 carries the post-translational modification Phosphoserine. Residues 766-912 (KKPSYPIQRN…KKKKGGLVSM (147 aa)) are disordered. The segment covering 784 to 794 (SLRRTQRKRQH) has biased composition (basic residues). The span at 795 to 816 (TYLTRSNIEHNSQASSQTSGVQ) shows a compositional bias: polar residues. The segment covering 817-828 (EDSDSSSEEDET) has biased composition (acidic residues). Low complexity predominate over residues 845–858 (SESSSSDSSSEYSD). A compositionally biased stretch (polar residues) spans 875-884 (RQATQKIYSS). A phosphoserine mark is found at Ser-884 and Ser-885. A compositionally biased stretch (basic residues) spans 897–907 (KKPKQTKKKKG). The Bromo 1 domain occupies 1136–1243 (WGAHSRDEEC…DVLLRFIGDQ (108 aa)). Disordered stretches follow at residues 1258–1291 (EDPD…KCRG), 1321–1366 (EPFR…IDTP), 1435–1482 (IQSQ…QNTS), and 1517–1723 (SPSS…AKRA). The span at 1260–1276 (PDSSDLEEDSEMVDLDS) shows a compositional bias: acidic residues. One can recognise a Bromo 2 domain in the interval 1298–1427 (CNPDAWKKQC…ALFENHIKNI (130 aa)). Positions 1333–1348 (PVQQQQEGESSQSVPP) are enriched in low complexity. Residues 1438–1450 (QKRRRPRYRKRLR) show a composition bias toward basic residues. 2 stretches are compositionally biased toward low complexity: residues 1451–1463 (SSSS…RAPS) and 1517–1530 (SPSS…SGNS). Phosphoserine is present on residues Ser-1574 and Ser-1576. The segment covering 1584-1596 (GEEKEMKETKEQV) has biased composition (basic and acidic residues). Over residues 1598–1623 (LSSSESGELGSSLSSESTSGSDSDSE) the composition is skewed to low complexity. Positions 1624-1640 (STSRTDQDYVDGDHDYS) are enriched in basic and acidic residues. Basic residues-rich tracts occupy residues 1646–1663 (RPKR…RNWK) and 1681–1694 (RGGR…RGGR). Phosphoserine is present on Ser-1760.

In terms of biological role, plays a role in the regulation of cell morphology and cytoskeletal organization. Required in the control of cell shape. This is Bromodomain and WD repeat-containing protein 3 (Brwd3) from Mus musculus (Mouse).